Consider the following 616-residue polypeptide: Dihydroxy-acid dehydratase (616 aa).

Aspartate 81 is a binding site for Mg(2+). Position 122 (cysteine 122) interacts with [2Fe-2S] cluster. Aspartate 123 and lysine 124 together coordinate Mg(2+). Lysine 124 is subject to N6-carboxylysine. A [2Fe-2S] cluster-binding site is contributed by cysteine 195. Glutamate 491 is a binding site for Mg(2+). Serine 517 serves as the catalytic Proton acceptor.

It belongs to the IlvD/Edd family. As to quaternary structure, homodimer. The cofactor is [2Fe-2S] cluster. Mg(2+) is required as a cofactor.

It catalyses the reaction (2R)-2,3-dihydroxy-3-methylbutanoate = 3-methyl-2-oxobutanoate + H2O. It carries out the reaction (2R,3R)-2,3-dihydroxy-3-methylpentanoate = (S)-3-methyl-2-oxopentanoate + H2O. The protein operates within amino-acid biosynthesis; L-isoleucine biosynthesis; L-isoleucine from 2-oxobutanoate: step 3/4. Its pathway is amino-acid biosynthesis; L-valine biosynthesis; L-valine from pyruvate: step 3/4. In terms of biological role, functions in the biosynthesis of branched-chain amino acids. Catalyzes the dehydration of (2R,3R)-2,3-dihydroxy-3-methylpentanoate (2,3-dihydroxy-3-methylvalerate) into 2-oxo-3-methylpentanoate (2-oxo-3-methylvalerate) and of (2R)-2,3-dihydroxy-3-methylbutanoate (2,3-dihydroxyisovalerate) into 2-oxo-3-methylbutanoate (2-oxoisovalerate), the penultimate precursor to L-isoleucine and L-valine, respectively. This Yersinia enterocolitica serotype O:8 / biotype 1B (strain NCTC 13174 / 8081) protein is Dihydroxy-acid dehydratase.